An 84-amino-acid chain; its full sequence is Small ribosomal subunit protein uS17 (84 aa).

This sequence belongs to the universal ribosomal protein uS17 family. In terms of assembly, part of the 30S ribosomal subunit.

Its function is as follows. One of the primary rRNA binding proteins, it binds specifically to the 5'-end of 16S ribosomal RNA. The protein is Small ribosomal subunit protein uS17 of Buchnera aphidicola subsp. Cinara cedri (strain Cc).